The sequence spans 310 residues: Olfactory receptor 8B8 (310 aa).

The Extracellular portion of the chain corresponds to 1–27 (MATENASVPEFILAGLTDQPGLRMPLF). The N-linked (GlcNAc...) asparagine glycan is linked to Asn5. The chain crosses the membrane as a helical span at residues 28–48 (FLFLGFYMVTMVGNLGLITLI). Residues 49–55 (GLNSHLH) are Cytoplasmic-facing. The chain crosses the membrane as a helical span at residues 56-76 (TPMYFFLFNLSLIDFCYSTVI). The Extracellular segment spans residues 77-98 (TPKMLVSFVSKKNIISYSGCMT). Cys96 and Cys188 are oxidised to a cystine. Residues 99–119 (QLFFFLFFVVSESFILSAMAY) traverse the membrane as a helical segment. The Cytoplasmic portion of the chain corresponds to 120-140 (DRYVAICNPLMYTVTMSPQVC). The helical transmembrane segment at 141–161 (LLLLLGVYVMGFAGAMAHTAF) threads the bilayer. The Extracellular segment spans residues 162-195 (MVKLTFCADKLVNHYMCDILPLLERSCTSTYVNE). Residues 196-216 (LVVFIVVGIDIGVPTVTIFIS) form a helical membrane-spanning segment. Residues 217–238 (YALILSSILRISSTEGRSKAFS) are Cytoplasmic-facing. A helical transmembrane segment spans residues 239–259 (TCSSHIIAVSLFFGSGAFMYL). Residues 260–270 (KPSSLLPMNQG) lie on the Extracellular side of the membrane. A helical transmembrane segment spans residues 271 to 291 (KVSSLFYTIVVPMLNPLIYSL). Residues 292 to 310 (RNKDVKVALRKTLSRSSFS) are Cytoplasmic-facing.

It belongs to the G-protein coupled receptor 1 family.

It localises to the cell membrane. Odorant receptor. The polypeptide is Olfactory receptor 8B8 (Mus musculus (Mouse)).